The primary structure comprises 82 residues: Chaperone protein DnaJ 1 (82 aa).

The interval 1–33 (YHLGGPPVTLKLPPGTPAGRTMRARGKGAVRKD) is disordered.

The protein belongs to the DnaJ family. In terms of assembly, homodimer. The cofactor is Zn(2+).

Its subcellular location is the cytoplasm. Its function is as follows. Participates actively in the response to hyperosmotic and heat shock by preventing the aggregation of stress-denatured proteins and by disaggregating proteins, also in an autonomous, DnaK-independent fashion. Unfolded proteins bind initially to DnaJ; upon interaction with the DnaJ-bound protein, DnaK hydrolyzes its bound ATP, resulting in the formation of a stable complex. GrpE releases ADP from DnaK; ATP binding to DnaK triggers the release of the substrate protein, thus completing the reaction cycle. Several rounds of ATP-dependent interactions between DnaJ, DnaK and GrpE are required for fully efficient folding. Also involved, together with DnaK and GrpE, in the DNA replication of plasmids through activation of initiation proteins. This is Chaperone protein DnaJ 1 (dnaJ1) from Streptomyces albus G.